We begin with the raw amino-acid sequence, 276 residues long: 5-deoxy-glucuronate isomerase (276 aa).

It belongs to the isomerase IolB family.

The enzyme catalyses 5-deoxy-D-glucuronate = 5-dehydro-2-deoxy-D-gluconate. It participates in polyol metabolism; myo-inositol degradation into acetyl-CoA; acetyl-CoA from myo-inositol: step 4/7. In terms of biological role, involved in the isomerization of 5-deoxy-glucuronate (5DG) to 5-dehydro-2-deoxy-D-gluconate (DKG or 2-deoxy-5-keto-D-gluconate). The sequence is that of 5-deoxy-glucuronate isomerase from Geobacillus kaustophilus (strain HTA426).